The following is a 348-amino-acid chain: Zinc-type alcohol dehydrogenase-like protein C2E1P3.01 (348 aa).

It belongs to the zinc-containing alcohol dehydrogenase family. Quinone oxidoreductase subfamily.

It localises to the mitochondrion. This is Zinc-type alcohol dehydrogenase-like protein C2E1P3.01 from Schizosaccharomyces pombe (strain 972 / ATCC 24843) (Fission yeast).